We begin with the raw amino-acid sequence, 239 residues long: uncharacterized protein (239 aa).

8 consecutive transmembrane segments (helical) span residues 4–24, 29–49, 61–81, 84–104, 116–136, 139–159, 180–200, and 218–238; these read LIPK…LGMV, VIWH…VYPV, YQKW…ISVF, PPLI…MYFA, VAGV…GMGT, GWAW…SFYV, LLLP…AFIP, and IGIL…LFIT.

To H.influenzae HI_1626.

The protein resides in the cell membrane. This is an uncharacterized protein from Bacillus subtilis (strain 168).